The sequence spans 124 residues: Fluoride-specific ion channel FluC (124 aa).

A run of 3 helical transmembrane segments spans residues 36 to 56, 63 to 83, and 99 to 119; these read VGTMIVNVVGSFLMGVLVVVL, YAPFLMTGMLGGFTTFSAFSL, and AYVGLSVGLSLAGLMAGMAAV. Residues Gly73 and Thr76 each coordinate Na(+).

Belongs to the fluoride channel Fluc/FEX (TC 1.A.43) family.

Its subcellular location is the cell inner membrane. It carries out the reaction fluoride(in) = fluoride(out). With respect to regulation, na(+) is not transported, but it plays an essential structural role and its presence is essential for fluoride channel function. Functionally, fluoride-specific ion channel. Important for reducing fluoride concentration in the cell, thus reducing its toxicity. The polypeptide is Fluoride-specific ion channel FluC (Cereibacter sphaeroides (strain ATCC 17029 / ATH 2.4.9) (Rhodobacter sphaeroides)).